Here is a 183-residue protein sequence, read N- to C-terminus: Ubiquitin-conjugating enzyme E2 6 (183 aa).

Residues 1–148 (MASPSKRREM…VKEYCEKYAK (148 aa)) form the UBC core domain. Cysteine 85 serves as the catalytic Glycyl thioester intermediate. The interval 148–183 (KPEEILSDDDDDDSMSEDGSDSDDDDDDEIVGKADP) is disordered. Over residues 152–176 (ILSDDDDDDSMSEDGSDSDDDDDDE) the composition is skewed to acidic residues.

It belongs to the ubiquitin-conjugating enzyme family. As to expression, expressed in roots, petals, sepals and silique walls.

It catalyses the reaction S-ubiquitinyl-[E1 ubiquitin-activating enzyme]-L-cysteine + [E2 ubiquitin-conjugating enzyme]-L-cysteine = [E1 ubiquitin-activating enzyme]-L-cysteine + S-ubiquitinyl-[E2 ubiquitin-conjugating enzyme]-L-cysteine.. It participates in protein modification; protein ubiquitination. In terms of biological role, accepts the ubiquitin from the E1 complex and catalyzes its covalent attachment to other proteins. The polypeptide is Ubiquitin-conjugating enzyme E2 6 (UBC6) (Arabidopsis thaliana (Mouse-ear cress)).